The sequence spans 527 residues: G patch domain-containing protein 2 (527 aa).

The segment at 35 to 135 (LEESSEQARG…RPSSNLSSSV (101 aa)) is disordered. Residues 62 to 76 (RQARKRRGRKRRSYN) show a composition bias toward basic residues. Residues 97–116 (EPSKDYREKHSNNKKDRSDS) show a composition bias toward basic and acidic residues. S114, S116, and S145 each carry phosphoserine. Disordered stretches follow at residues 175 to 281 (SSKR…GDDE), 350 to 375 (TPSK…GSNK), and 480 to 527 (TPGS…GNPA). The span at 186–196 (GCRDQDMDNDR) shows a compositional bias: basic and acidic residues. The segment covering 206–215 (KKVKKRKLKG) has biased composition (basic residues). Positions 231 to 257 (SEERSQPNKDRMEYEEQKASDELRSES) are enriched in basic and acidic residues. The G-patch domain occupies 466-512 (ESNIGNRMLQSMGWTPGSGLGRDGRGIAEPVQAVQRPKGLGLGFPLP). The span at 510–527 (PLPKSSPTSPAPTSGNPA) shows a compositional bias: low complexity.

In terms of assembly, interacts with DHX15.

The protein localises to the nucleus speckle. The protein resides in the nucleus. Its subcellular location is the nucleolus. In terms of biological role, enhances the ATPase activity of DHX15 in vitro. This Mus musculus (Mouse) protein is G patch domain-containing protein 2 (Gpatch2).